A 353-amino-acid chain; its full sequence is Quinolinate synthase (353 aa).

The iminosuccinate site is built by H49 and S70. [4Fe-4S] cluster is bound at residue C115. Residues Y141 to N143 and S158 contribute to the iminosuccinate site. C202 provides a ligand contact to [4Fe-4S] cluster. Residues H228–E230 and T245 contribute to the iminosuccinate site. Residue C299 coordinates [4Fe-4S] cluster.

The protein belongs to the quinolinate synthase family. Type 1 subfamily. The cofactor is [4Fe-4S] cluster.

The protein resides in the cytoplasm. The enzyme catalyses iminosuccinate + dihydroxyacetone phosphate = quinolinate + phosphate + 2 H2O + H(+). It participates in cofactor biosynthesis; NAD(+) biosynthesis; quinolinate from iminoaspartate: step 1/1. Catalyzes the condensation of iminoaspartate with dihydroxyacetone phosphate to form quinolinate. The sequence is that of Quinolinate synthase from Hahella chejuensis (strain KCTC 2396).